The chain runs to 280 residues: MARRYCFTLNYATEIERETFLSLFSQDELNYFVVGDETATTGQKHLQGFVSFKNKIRLGGLKKKFGNRAHWEIARGSDSQNRDYCCKETLISEIGIPVMKGSNKRKTMEIYEEDPEEMQLKDPDTALRCKAKKLKEEYCSCYDFQKLRPWQIELHAALMAEPDDRSIIWVYGSDGGEGKTSFAKELIRYGWFYTAGGKTQDVLYMYAQDPERNIAFDVPRCSSEMMNYQAMEMLKNRVFASTKYRPVDLCIRKLVHLIVFANVAPDPTRISEDRLVIINC.

Residues 1–97 (MARRYCFTLN…ETLISEIGIP (97 aa)) form the CRESS-DNA virus Rep endonuclease domain. The short motif at 6-9 (CFTL) is the RCR-1 element. Positions 37 and 45 each coordinate a divalent metal cation. An RCR-2 motif is present at residues 45–47 (HLQ). Residues 54–75 (NKIRLGGLKKKFGNRAHWEIAR) carry the Nuclear localization signal motif. Tyr-84 functions as the For DNA cleavage activity in the catalytic mechanism. The short motif at 84–87 (YCCK) is the RCR-3 element. The Nuclear localization signal motif lies at 97–103 (PVMKGSN). 172-180 (GSDGGEGKT) provides a ligand contact to ATP.

The protein belongs to the nanoviridea/circoviridae replication-associated protein family. As to quaternary structure, homooligomer (Potential). Rep binds to repeated DNA motifs (iterons). Mg(2+) is required as a cofactor. It depends on Mn(2+) as a cofactor.

Its subcellular location is the host nucleus. It carries out the reaction ATP + H2O = ADP + phosphate + H(+). Functionally, initiates and terminates the replication only of its own subviral DNA molecule. The closed circular ssDNA genome is first converted to a superhelical dsDNA. Rep binds a specific hairpin at the genome origin of replication. Introduces an endonucleolytic nick within the intergenic region of the genome, thereby initiating the rolling circle replication (RCR). Following cleavage, binds covalently to the 5'-phosphate of DNA as a tyrosyl ester. The cleavage gives rise to a free 3'-OH that serves as a primer for the cellular DNA polymerase. The polymerase synthesizes the (+) strand DNA by rolling circle mechanism. After one round of replication, a Rep-catalyzed nucleotidyl transfer reaction releases a circular single-stranded virus genome, thereby terminating the replication. Displays origin-specific DNA cleavage, nucleotidyl transferase, ATPase and helicase activities. The sequence is that of Para-Rep C2 (C2) from Subterranean clover stunt C2 alphasatellite (SCSC2A).